The sequence spans 48 residues: Small ribosomal subunit protein uS14 (48 aa).

Zn(2+)-binding residues include Cys13, Cys16, Cys31, and Cys34.

This sequence belongs to the universal ribosomal protein uS14 family. Zinc-binding uS14 subfamily. Part of the 30S ribosomal subunit. It depends on Zn(2+) as a cofactor.

In terms of biological role, binds 16S rRNA, required for the assembly of 30S particles. This is Small ribosomal subunit protein uS14 from Methanopyrus kandleri (strain AV19 / DSM 6324 / JCM 9639 / NBRC 100938).